A 503-amino-acid chain; its full sequence is Maturase K (503 aa).

The protein belongs to the intron maturase 2 family. MatK subfamily.

The protein localises to the plastid. The protein resides in the chloroplast. Usually encoded in the trnK tRNA gene intron. Probably assists in splicing its own and other chloroplast group II introns. The protein is Maturase K of Rosa californica (California wild rose).